Reading from the N-terminus, the 390-residue chain is Tuftelin (390 aa).

Coiled coils occupy residues 88-126 (DKMI…KLDR) and 162-351 (DTCI…IEKQ). Positions 358–390 (STQARAKTENPGSIRISKPPSPKPMPVIRVVET) are disordered.

This sequence belongs to the tuftelin family. Interacts with TFIP11. In terms of tissue distribution, expressed in the epidermis (at protein level). Present in the extracellular enamel and is mainly associated with the crystal component.

Its subcellular location is the secreted. Its function is as follows. Involved in the structural organization of the epidermis. Involved in the mineralization and structural organization of enamel. The chain is Tuftelin (TUFT1) from Homo sapiens (Human).